The sequence spans 327 residues: Biotin synthase (327 aa).

The Radical SAM core domain maps to 49–282 (FNKEKIDLCS…KKVIRLCGGR (234 aa)). [4Fe-4S] cluster-binding residues include cysteine 67, cysteine 71, and cysteine 74. Positions 110, 142, 201, and 277 each coordinate [2Fe-2S] cluster.

The protein belongs to the radical SAM superfamily. Biotin synthase family. As to quaternary structure, homodimer. [4Fe-4S] cluster serves as cofactor. The cofactor is [2Fe-2S] cluster.

The catalysed reaction is (4R,5S)-dethiobiotin + (sulfur carrier)-SH + 2 reduced [2Fe-2S]-[ferredoxin] + 2 S-adenosyl-L-methionine = (sulfur carrier)-H + biotin + 2 5'-deoxyadenosine + 2 L-methionine + 2 oxidized [2Fe-2S]-[ferredoxin]. Its pathway is cofactor biosynthesis; biotin biosynthesis; biotin from 7,8-diaminononanoate: step 2/2. Catalyzes the conversion of dethiobiotin (DTB) to biotin by the insertion of a sulfur atom into dethiobiotin via a radical-based mechanism. In Methanococcus maripaludis (strain C7 / ATCC BAA-1331), this protein is Biotin synthase.